A 548-amino-acid polypeptide reads, in one-letter code: Nodulation protein NolO (548 aa).

This sequence belongs to the NodU/CmcH family.

Its function is as follows. Involved in 6-O-carbamoylation of Nod-factors. This chain is Nodulation protein NolO (nolO), found in Bradyrhizobium diazoefficiens (strain JCM 10833 / BCRC 13528 / IAM 13628 / NBRC 14792 / USDA 110).